Consider the following 67-residue polypeptide: Large ribosomal subunit protein uL29 (67 aa).

Belongs to the universal ribosomal protein uL29 family.

The chain is Large ribosomal subunit protein uL29 from Desulfitobacterium hafniense (strain DSM 10664 / DCB-2).